The sequence spans 95 residues: MTDESMSYQEKAYALLQADAEKIIQLIRVQMDHLTMPQCPLYEEVLDTQMFGLSREIDFAVRLGLIEAKEGKALLDRLERELSALHEAVTKKRVR.

It belongs to the UPF0358 family.

The chain is UPF0358 protein GTNG_0942 from Geobacillus thermodenitrificans (strain NG80-2).